Consider the following 455-residue polypeptide: E3 ubiquitin-protein ligase IPI1 (455 aa).

Residues 1-42 (MGAEEEEEPASAVGREGGGGGGGARAAGAGAGGDTADDDDSG) are disordered. The span at 15–33 (REGGGGGGGARAAGAGAGG) shows a compositional bias: gly residues. Residues 51–97 (CSICLDAVVAGGGDRSTARLQCGHEFHLDCIGSAFNAKGVMQCPNCR) form an RING-type; atypical zinc finger. Disordered stretches follow at residues 286–311 (LDSDSQQRGSLPSVYGNGSGSRSRIP) and 426–455 (QWIGAGRSPPPPPPPPADNSSYRQMHIPRM). The span at 433–442 (SPPPPPPPPA) shows a compositional bias: pro residues.

As to quaternary structure, interacts with SPL14/IPA1.

It is found in the nucleus. The catalysed reaction is S-ubiquitinyl-[E2 ubiquitin-conjugating enzyme]-L-cysteine + [acceptor protein]-L-lysine = [E2 ubiquitin-conjugating enzyme]-L-cysteine + N(6)-ubiquitinyl-[acceptor protein]-L-lysine.. The protein operates within protein modification; protein ubiquitination. Functions as an E3 ligase that promotes polyubiquitination of SPL14/IPA1 for subsequent proteasomal degradation. Regulates plant architecture by modulating SPL14/IPA1 abundance. Promotes the degradation of SPL14/IPA1 in panicles, while it stabilizes SPL14/IPA1 in shoot apices. Ubiquitinates the SPL14/IPA1-mediated complex with 'Lys-48'-linked polyubiquitin in panicles and 'Lys-63'-linked polyubiquitin chains in the shoot apex. This chain is E3 ubiquitin-protein ligase IPI1, found in Oryza sativa subsp. japonica (Rice).